The sequence spans 112 residues: T cell receptor alpha variable 21 (112 aa).

Residues 1–19 form the signal peptide; that stretch reads METLLGLLILWLQLQWVSS. One can recognise an Ig-like domain in the interval 21 to 112; sequence QEVTQIPAAL…DSATYLCAVR (92 aa). Asparagine 41 and asparagine 82 each carry an N-linked (GlcNAc...) asparagine glycan. The cysteines at positions 42 and 109 are disulfide-linked.

As to quaternary structure, alpha-beta TR is a heterodimer composed of an alpha and beta chain; disulfide-linked. The alpha-beta TR is associated with the transmembrane signaling CD3 coreceptor proteins to form the TR-CD3 (TcR or TCR). The assembly of alpha-beta TR heterodimers with CD3 occurs in the endoplasmic reticulum where a single alpha-beta TR heterodimer associates with one CD3D-CD3E heterodimer, one CD3G-CD3E heterodimer and one CD247 homodimer forming a stable octameric structure. CD3D-CD3E and CD3G-CD3E heterodimers preferentially associate with TR alpha and TR beta chains, respectively. The association of the CD247 homodimer is the last step of TcR assembly in the endoplasmic reticulum and is required for transport to the cell surface.

The protein resides in the cell membrane. Its function is as follows. V region of the variable domain of T cell receptor (TR) alpha chain that participates in the antigen recognition. Alpha-beta T cell receptors are antigen specific receptors which are essential to the immune response and are present on the cell surface of T lymphocytes. Recognize peptide-major histocompatibility (MH) (pMH) complexes that are displayed by antigen presenting cells (APC), a prerequisite for efficient T cell adaptive immunity against pathogens. Binding of alpha-beta TR to pMH complex initiates TR-CD3 clustering on the cell surface and intracellular activation of LCK that phosphorylates the ITAM motifs of CD3G, CD3D, CD3E and CD247 enabling the recruitment of ZAP70. In turn ZAP70 phosphorylates LAT, which recruits numerous signaling molecules to form the LAT signalosome. The LAT signalosome propagates signal branching to three major signaling pathways, the calcium, the mitogen-activated protein kinase (MAPK) kinase and the nuclear factor NF-kappa-B (NF-kB) pathways, leading to the mobilization of transcription factors that are critical for gene expression and essential for T cell growth and differentiation. The T cell repertoire is generated in the thymus, by V-(D)-J rearrangement. This repertoire is then shaped by intrathymic selection events to generate a peripheral T cell pool of self-MH restricted, non-autoaggressive T cells. Post-thymic interaction of alpha-beta TR with the pMH complexes shapes TR structural and functional avidity. This Homo sapiens (Human) protein is T cell receptor alpha variable 21.